Here is a 320-residue protein sequence, read N- to C-terminus: Short-chain dehydrogenase/reductase ATR7 (320 aa).

Residues serine 32, isoleucine 34, glutamine 55, aspartate 70, asparagine 93, lysine 134, tyrosine 167, lysine 171, and threonine 202 each contribute to the NADP(+) site. Residue tyrosine 167 is the Proton acceptor of the active site. Catalysis depends on lysine 171, which acts as the Lowers pKa of active site Tyr.

This sequence belongs to the short-chain dehydrogenases/reductases (SDR) family.

It participates in mycotoxin biosynthesis. Its function is as follows. Short-chain dehydrogenase/reductase; part of the core atranone cluster (CAC) which products are predicted to catalyze most or all steps of mycotoxin atranone synthesis, starting from geranylgeranyl pyrophosphate (GGPP). The initial cyclization of GGPP to dolabellane is probably performed by the terpene cyclase ATR13. The Baeyer-Villiger oxidation near the end of the atranone synthesis, which converts atranones D and E to atranones F and G is predicted to be catalyzed by the monooxygenase ATR8. Of the CAC's other predicted gene products, the reducing PKS ATR6 might synthesize a polyketide chain. This polyketide is probably transferred onto the atranone backbone by the polyketide transferase ATR5. Other predicted CAC products include 4 oxygenases (ATR2, ATR3, ATR4, and ATR14), 3 short-chain reductases (ATR7, ATR9, and ATR10), and a methyltransferase (ATR12). These may all be involved in the various steps of atranone biosynthesis, although their specific roles must await experimental determination. This Stachybotrys chlorohalonatus (strain IBT 40285) protein is Short-chain dehydrogenase/reductase ATR7.